Consider the following 469-residue polypeptide: RNA-editing ligase 1, mitochondrial (469 aa).

The N-terminal 44 residues, 1–44 (MQLQRLGAPLLKRLVGGCIRQSTAPIMPCVVVSGSGGFLTPVRT), are a transit peptide targeting the mitochondrion. ATP-binding positions include 59-61 (IEI), 86-92 (EKVHGTN), Asn92, Arg111, Glu159, Phe209, and 307-309 (KLR). Catalysis depends on Lys87, which acts as the N6-AMP-lysine intermediate. The segment at 450-469 (AAAQSEAIPPLSPAAPTKGE) is disordered.

The protein belongs to the RNA ligase 2 family. In terms of assembly, component of the RNA editing complex (editosome), a 1600 kDa complex composed of at least 20 proteins. Interacts with terminal uridylyltransferase MEAT1.

It is found in the mitochondrion. The enzyme catalyses ATP + (ribonucleotide)n-3'-hydroxyl + 5'-phospho-(ribonucleotide)m = (ribonucleotide)n+m + AMP + diphosphate.. In terms of biological role, essential for RNA editing. RNA editing in kinetoplastid mitochondria inserts and deletes uridylates at multiple sites in pre-mRNAs as directed by guide RNAs. The sequence is that of RNA-editing ligase 1, mitochondrial (REL1) from Trypanosoma brucei brucei (strain 927/4 GUTat10.1).